Reading from the N-terminus, the 245-residue chain is 1-(5-phosphoribosyl)-5-[(5-phosphoribosylamino)methylideneamino] imidazole-4-carboxamide isomerase (245 aa).

Catalysis depends on Asp10, which acts as the Proton acceptor. Residue Asp135 is the Proton donor of the active site.

Belongs to the HisA/HisF family.

It is found in the cytoplasm. It catalyses the reaction 1-(5-phospho-beta-D-ribosyl)-5-[(5-phospho-beta-D-ribosylamino)methylideneamino]imidazole-4-carboxamide = 5-[(5-phospho-1-deoxy-D-ribulos-1-ylimino)methylamino]-1-(5-phospho-beta-D-ribosyl)imidazole-4-carboxamide. It participates in amino-acid biosynthesis; L-histidine biosynthesis; L-histidine from 5-phospho-alpha-D-ribose 1-diphosphate: step 4/9. The protein is 1-(5-phosphoribosyl)-5-[(5-phosphoribosylamino)methylideneamino] imidazole-4-carboxamide isomerase of Methanosarcina barkeri (strain Fusaro / DSM 804).